Consider the following 86-residue polypeptide: Protein Vpu (86 aa).

Over 1-8 (MDIVQQVG) the chain is Extracellular. A helical transmembrane segment spans residues 9-29 (LLVVLIIELVIVIVIWVKVYK). At 30 to 86 (LCKEDRRQKKIDRLIARIRERAEDSGNESDGDTEELQDLITEGDNLMHIGIRDNRNN) the chain is on the cytoplasmic side. 2 positions are modified to phosphoserine; by host CK2: Ser54 and Ser58.

The protein belongs to the HIV-1 VPU protein family. In terms of assembly, homopentamer. Interacts with host CD4 and BRTC; these interactions induce proteasomal degradation of CD4. Interacts with host BST2; this interaction leads to the degradation of host BST2. Interacts with host FBXW11. Interacts with host AP1M1; this interaction plays a role in the mistrafficking and subsequent degradation of host BST2. Interacts with host RANBP2; this interaction allows Vpu to down-regulate host BLM sumoylation. Forms pentamers or hexamers. Interacts with host CD4 and BRTC; these interactions induce proteasomal degradation of CD4. Interacts with host BST2; this interaction leads to the degradation of host BST2. Interacts with host FBXW11. Interacts with host AP1M1; this interaction plays a role in the mistrafficking and subsequent degradation of host BST2. In terms of processing, phosphorylated by host CK2. This phosphorylation is necessary for interaction with human BTRC and degradation of CD4.

It is found in the host membrane. Ion channel activity is inhibited by hexamethylene amiloride in vitro. Enhances virion budding by targeting host CD4 and Tetherin/BST2 to proteasome degradation. Degradation of CD4 prevents any unwanted premature interactions between viral Env and its host receptor CD4 in the endoplasmic reticulum. Degradation of antiretroviral protein Tetherin/BST2 is important for virion budding, as BST2 tethers new viral particles to the host cell membrane. Mechanistically, Vpu bridges either CD4 or BST2 to BTRC, a substrate recognition subunit of the Skp1/Cullin/F-box protein E3 ubiquitin ligase, induces their ubiquitination and subsequent proteasomal degradation. The alteration of the E3 ligase specificity by Vpu seems to promote the degradation of host IKBKB, leading to NF-kappa-B down-regulation and subsequent apoptosis. Acts as a viroporin that forms an oligomeric ion channel in membranes. Modulates the host DNA repair mechanisms to promote degradation of nuclear viral cDNA in cells that are already productively infected in order to suppress immune sensing and proviral hyper-integration (superinfection). Manipulates PML-NBs and modulates SUMOylation of host BLM protein thereby enhancing its DNA-end processing activity toward viral unintegrated linear DNA. Also inhibits RAD52-mediated homologous repair of viral cDNA, preventing the generation of dead-end circular forms of single copies of the long terminal repeat and permitting sustained nucleolytic attack. This Pan troglodytes (Chimpanzee) protein is Protein Vpu.